The primary structure comprises 344 residues: L-rhamnose-proton symporter (344 aa).

The next 10 helical transmembrane spans lie at 4-24 (AITM…CFYA), 38-58 (WSVG…ALLL), 68-88 (FSLS…IGNI), 101-121 (MGIG…TPII), 137-157 (TLLG…AGQL), 175-195 (LVLA…MNAA), 214-234 (LPSY…FCFI), 259-279 (VLLS…YAWG), 290-310 (ISWM…GLVL), and 323-343 (VLSL…IGMA).

This sequence belongs to the L-rhamnose transporter (TC 2.A.7.6) family.

It localises to the cell inner membrane. The catalysed reaction is L-rhamnopyranose(in) + H(+)(in) = L-rhamnopyranose(out) + H(+)(out). In terms of biological role, uptake of L-rhamnose across the cytoplasmic membrane with the concomitant transport of protons into the cell (symport system). In Escherichia coli (strain ATCC 8739 / DSM 1576 / NBRC 3972 / NCIMB 8545 / WDCM 00012 / Crooks), this protein is L-rhamnose-proton symporter.